The sequence spans 462 residues: Golgi-associated PDZ and coiled-coil motif-containing protein (462 aa).

Residues 83–194 (KAQSVSQINH…EDEALRGHIA (112 aa)) adopt a coiled-coil conformation. The region spanning 288-371 (KVLLLKEDHE…EIEFEVVYVA (84 aa)) is the PDZ domain. The segment at 427–449 (TDTHENGDLGTASETPLDDGASK) is disordered.

Homooligomer. Interacts with FZD5. Interacts with FZD8. Interacts with GRID2 and BECN1. Interacts with CSPG5. Interacts with CLCN3. Interacts with STX6. Interacts with CFTR. Interacts with ASIC3. Interacts with GOLGA3. Interacts with NLGN1. Interacts with RHOQ. Interacts with MARCHF2; the interaction leads to CFTR ubiquitination and degradation. May interact with CACNG2. Interacts with CCDC62.

Its subcellular location is the cytoplasm. The protein localises to the golgi apparatus membrane. It is found in the golgi apparatus. The protein resides in the trans-Golgi network membrane. It localises to the synapse. Its subcellular location is the postsynaptic density. The protein localises to the cell projection. It is found in the dendrite. Plays a role in intracellular protein trafficking and degradation. May regulate CFTR chloride currents and acid-induced ASIC3 currents by modulating cell surface expression of both channels. May also regulate the intracellular trafficking of the ADR1B receptor. May play a role in autophagy. Together with MARCHF2 mediates the ubiquitination and lysosomal degradation of CFTR. Overexpression results in CFTR intracellular retention and degradation in the lysosomes. The sequence is that of Golgi-associated PDZ and coiled-coil motif-containing protein (GOPC) from Pongo abelii (Sumatran orangutan).